The sequence spans 609 residues: UvrABC system protein C (609 aa).

One can recognise a GIY-YIG domain in the interval 22 to 100 (EKPGVYQYLN…IKKYKPRYNV (79 aa)). One can recognise a UVR domain in the interval 214–249 (QDISRMLVEKMQELANEMKFEEAQKIKEKYLLIENY).

This sequence belongs to the UvrC family. Interacts with UvrB in an incision complex.

Its subcellular location is the cytoplasm. Its function is as follows. The UvrABC repair system catalyzes the recognition and processing of DNA lesions. UvrC both incises the 5' and 3' sides of the lesion. The N-terminal half is responsible for the 3' incision and the C-terminal half is responsible for the 5' incision. The polypeptide is UvrABC system protein C (Bacteroides thetaiotaomicron (strain ATCC 29148 / DSM 2079 / JCM 5827 / CCUG 10774 / NCTC 10582 / VPI-5482 / E50)).